A 265-amino-acid polypeptide reads, in one-letter code: Endochitinase At2g43580 (265 aa).

The signal sequence occupies residues 1–24 (MALTKIFLILLLSLLGLYSETVKS). One can recognise a Chitin-binding type-1 domain in the interval 25–59 (QNCDCAPNLCCSQFGYCGTTADYCGSTCQSGPCRV). Cystine bridges form between Cys27–Cys35, Cys29–Cys41, Cys34–Cys48, and Cys52–Cys57. The catalytic stretch occupies residues 67 to 265 (GLVGNIVTQI…GLDPGANITC (199 aa)). N-linked (GlcNAc...) asparagine glycosylation is present at Asn102. Glu129 acts as the Proton donor in catalysis. An N-linked (GlcNAc...) asparagine glycan is attached at Asn262.

Belongs to the glycosyl hydrolase 19 family. Chitinase class I subfamily.

It catalyses the reaction Random endo-hydrolysis of N-acetyl-beta-D-glucosaminide (1-&gt;4)-beta-linkages in chitin and chitodextrins.. The sequence is that of Endochitinase At2g43580 from Arabidopsis thaliana (Mouse-ear cress).